Here is a 640-residue protein sequence, read N- to C-terminus: 1-deoxy-D-xylulose-5-phosphate synthase (640 aa).

Residues His79 and 120–122 each bind thiamine diphosphate; that span reads AHA. Residue Asp151 participates in Mg(2+) binding. Residues 152-153, Asn180, Tyr287, and Glu369 each bind thiamine diphosphate; that span reads GS. Asn180 contributes to the Mg(2+) binding site.

It belongs to the transketolase family. DXPS subfamily. In terms of assembly, homodimer. Mg(2+) serves as cofactor. Thiamine diphosphate is required as a cofactor.

It catalyses the reaction D-glyceraldehyde 3-phosphate + pyruvate + H(+) = 1-deoxy-D-xylulose 5-phosphate + CO2. It participates in metabolic intermediate biosynthesis; 1-deoxy-D-xylulose 5-phosphate biosynthesis; 1-deoxy-D-xylulose 5-phosphate from D-glyceraldehyde 3-phosphate and pyruvate: step 1/1. In terms of biological role, catalyzes the acyloin condensation reaction between C atoms 2 and 3 of pyruvate and glyceraldehyde 3-phosphate to yield 1-deoxy-D-xylulose-5-phosphate (DXP). This Hyphomonas neptunium (strain ATCC 15444) protein is 1-deoxy-D-xylulose-5-phosphate synthase.